A 44-amino-acid chain; its full sequence is Photosystem II reaction center protein K (44 aa).

Positions 1 to 7 (MESLLLA) are excised as a propeptide. A helical transmembrane segment spans residues 23 to 43 (FPVIPVFFLLLAFVWQAAVGF).

The protein belongs to the PsbK family. In terms of assembly, PSII is composed of 1 copy each of membrane proteins PsbA, PsbB, PsbC, PsbD, PsbE, PsbF, PsbH, PsbI, PsbJ, PsbK, PsbL, PsbM, PsbT, PsbX, PsbY, PsbZ, Psb30/Ycf12, at least 3 peripheral proteins of the oxygen-evolving complex and a large number of cofactors. It forms dimeric complexes.

Its subcellular location is the plastid. The protein resides in the chloroplast thylakoid membrane. Functionally, one of the components of the core complex of photosystem II (PSII). PSII is a light-driven water:plastoquinone oxidoreductase that uses light energy to abstract electrons from H(2)O, generating O(2) and a proton gradient subsequently used for ATP formation. It consists of a core antenna complex that captures photons, and an electron transfer chain that converts photonic excitation into a charge separation. This is Photosystem II reaction center protein K from Thalassiosira pseudonana (Marine diatom).